A 189-amino-acid chain; its full sequence is Large ribosomal subunit protein uL5 (189 aa).

Belongs to the universal ribosomal protein uL5 family. As to quaternary structure, part of the 50S ribosomal subunit; part of the 5S rRNA/L5/L18/L25 subcomplex. Contacts the 5S rRNA and the P site tRNA. Forms a bridge to the 30S subunit in the 70S ribosome.

Its function is as follows. This is one of the proteins that bind and probably mediate the attachment of the 5S RNA into the large ribosomal subunit, where it forms part of the central protuberance. In the 70S ribosome it contacts protein S13 of the 30S subunit (bridge B1b), connecting the 2 subunits; this bridge is implicated in subunit movement. Contacts the P site tRNA; the 5S rRNA and some of its associated proteins might help stabilize positioning of ribosome-bound tRNAs. The chain is Large ribosomal subunit protein uL5 from Parafrankia sp. (strain EAN1pec).